The sequence spans 377 residues: Ipis-1 (377 aa).

N-linked (GlcNAc...) asparagine glycosylation is found at Asn11 and Asn226.

Belongs to the serpin family. As to expression, female salivary gland. Not detected in midgut and other tissues.

It localises to the secreted. Its function is as follows. Salivary protein with immunosuppressive properties that can modulate blood feeding of ticks on vertebrate species. Inhibits proliferation of bovine peripheral blood mononuclear cells (PBMCs). Inhibits IFN-gamma (IFNG) production by bovine PBMCs. This chain is Ipis-1, found in Ixodes persulcatus (Taiga tick).